The primary structure comprises 342 residues: N-acetyl-gamma-glutamyl-phosphate reductase (342 aa).

Cys149 is an active-site residue.

It belongs to the NAGSA dehydrogenase family. Type 1 subfamily.

The protein localises to the cytoplasm. The enzyme catalyses N-acetyl-L-glutamate 5-semialdehyde + phosphate + NADP(+) = N-acetyl-L-glutamyl 5-phosphate + NADPH + H(+). It functions in the pathway amino-acid biosynthesis; L-arginine biosynthesis; N(2)-acetyl-L-ornithine from L-glutamate: step 3/4. Catalyzes the NADPH-dependent reduction of N-acetyl-5-glutamyl phosphate to yield N-acetyl-L-glutamate 5-semialdehyde. This is N-acetyl-gamma-glutamyl-phosphate reductase from Cereibacter sphaeroides (strain ATCC 17029 / ATH 2.4.9) (Rhodobacter sphaeroides).